A 547-amino-acid chain; its full sequence is Chaperonin GroEL 2 (547 aa).

Residues 30 to 33 (TLGP), lysine 51, 87 to 91 (DGTTT), glycine 415, 479 to 481 (NAA), and aspartate 495 contribute to the ATP site. The tract at residues 525 to 547 (PKEESAAPAGGGMGGMGGMGGMM) is disordered. A compositionally biased stretch (gly residues) spans 533 to 547 (AGGGMGGMGGMGGMM).

This sequence belongs to the chaperonin (HSP60) family. In terms of assembly, forms a cylinder of 14 subunits composed of two heptameric rings stacked back-to-back. Interacts with the co-chaperonin GroES.

Its subcellular location is the cytoplasm. It carries out the reaction ATP + H2O + a folded polypeptide = ADP + phosphate + an unfolded polypeptide.. Together with its co-chaperonin GroES, plays an essential role in assisting protein folding. The GroEL-GroES system forms a nano-cage that allows encapsulation of the non-native substrate proteins and provides a physical environment optimized to promote and accelerate protein folding. This is Chaperonin GroEL 2 from Anaeromyxobacter dehalogenans (strain 2CP-C).